Here is a 1088-residue protein sequence, read N- to C-terminus: Pathogenesis-related homeodomain protein (1088 aa).

8 repeat units span residues Ile140 to Val152, Asn173 to Asp199, Gly205 to Thr239, Gly240 to Asn274, Ile283 to Val295, Asn316 to Asp342, Gly348 to Thr382, and Gly383 to Asp417. A 2 X 13 AA repeats region spans residues Ile140–Val295. The interval Asn173–Asp342 is 2 X 27 AA approximate repeats. The 2 X 35 AA approximate tandem repeats (type C) stretch occupies residues Gly205–Asn274. The segment at Pro220 to Asn282 is disordered. 2 DNA-binding regions (a.T hook) span residues Thr226–Lys236 and Thr261–Lys271. The segment covering Val272–Asn282 has biased composition (polar residues). Positions Ser303 to Ser320 are enriched in polar residues. 2 disordered regions span residues Ser303–Thr343 and Pro363–Glu484. The segment at Gly348 to Asp417 is 2 X 35 AA approximate tandem repeats (type C). 2 DNA-binding regions (a.T hook) span residues Ala369–Lys379 and Thr404–Lys414. Residues Asp578–Lys635 form a PHD-type zinc finger. Disordered stretches follow at residues Ala667 to Pro810 and Glu851 to Ser901. The stretch at Gly678 to Gly693 is one 4-1 repeat. The tract at residues Gly678–Gly744 is 2 X 16 AA Asp/Glu-rich (acidic) repeats. Over residues Ser705–Asp718 the composition is skewed to acidic residues. Residues Gly729–Gly744 form a 4-2 repeat. Basic and acidic residues-rich tracts occupy residues Asp788–Gln802 and Asn874–Ser901. Residues Lys935 to Ser994 constitute a DNA-binding region (homeobox).

This sequence belongs to the PHD-associated homeobox family.

The protein localises to the nucleus. Specifically binds to the fungal elicitor-responsive DNA element, 5'-CTAATTGTTTA-3', of the gene PR2 promoter. This chain is Pathogenesis-related homeodomain protein (PRH), found in Petroselinum crispum (Parsley).